A 453-amino-acid chain; its full sequence is Growth/differentiation factor 9 (453 aa).

A signal peptide spans 1–27 (MALPNKFFLWFCCFAWLCFPISLDSLP). The propeptide occupies 28 to 318 (SRGEAQIVAR…EGVRSSRHRR (291 aa)). N-linked (GlcNAc...) asparagine glycans are attached at residues asparagine 163, asparagine 236, asparagine 255, and asparagine 269. The interval 282-328 (LHPKRKPSQGPDQRRELSAYPVGEEAAEGVRSSRHRRDQESVSSELK) is disordered. Positions 318–328 (RDQESVSSELK) are enriched in basic and acidic residues. Asparagine 337 carries N-linked (GlcNAc...) asparagine glycosylation. Intrachain disulfides connect cysteine 352-cysteine 418, cysteine 381-cysteine 450, and cysteine 385-cysteine 452.

This sequence belongs to the TGF-beta family. As to quaternary structure, homodimer or heterodimer (Potential). But, in contrast to other members of this family, cannot be disulfide-linked. Phosphorylated; phosphorylation is critical for GDF9 function.

The protein resides in the secreted. In terms of biological role, required for ovarian folliculogenesis. The sequence is that of Growth/differentiation factor 9 (GDF9) from Capra hircus (Goat).